A 195-amino-acid polypeptide reads, in one-letter code: ADP-ribosylation factor L (195 aa).

Gly-2 is lipidated: N-myristoyl glycine. GTP is bound by residues 25–32 (GLENSGKT), 72–76 (DLLYP), and 131–134 (NKQD).

It belongs to the small GTPase superfamily. Arf family.

Its function is as follows. May be involved in trafficking events within the endosomal system. The polypeptide is ADP-ribosylation factor L (arrL) (Dictyostelium discoideum (Social amoeba)).